The chain runs to 958 residues: Glycine dehydrogenase (decarboxylating) (958 aa).

At Lys705 the chain carries N6-(pyridoxal phosphate)lysine.

The protein belongs to the GcvP family. In terms of assembly, the glycine cleavage system is composed of four proteins: P, T, L and H. Requires pyridoxal 5'-phosphate as cofactor.

It carries out the reaction N(6)-[(R)-lipoyl]-L-lysyl-[glycine-cleavage complex H protein] + glycine + H(+) = N(6)-[(R)-S(8)-aminomethyldihydrolipoyl]-L-lysyl-[glycine-cleavage complex H protein] + CO2. Its function is as follows. The glycine cleavage system catalyzes the degradation of glycine. The P protein binds the alpha-amino group of glycine through its pyridoxal phosphate cofactor; CO(2) is released and the remaining methylamine moiety is then transferred to the lipoamide cofactor of the H protein. The polypeptide is Glycine dehydrogenase (decarboxylating) (Bdellovibrio bacteriovorus (strain ATCC 15356 / DSM 50701 / NCIMB 9529 / HD100)).